A 162-amino-acid polypeptide reads, in one-letter code: NADH-quinone oxidoreductase subunit I (162 aa).

4Fe-4S ferredoxin-type domains lie at 54–83 (RRYE…INST) and 93–122 (SSYE…ETNI). [4Fe-4S] cluster is bound by residues Cys63, Cys66, Cys69, Cys73, Cys102, Cys105, Cys108, and Cys112.

It belongs to the complex I 23 kDa subunit family. As to quaternary structure, NDH-1 is composed of 14 different subunits. Subunits NuoA, H, J, K, L, M, N constitute the membrane sector of the complex. [4Fe-4S] cluster is required as a cofactor.

The protein localises to the cell inner membrane. It catalyses the reaction a quinone + NADH + 5 H(+)(in) = a quinol + NAD(+) + 4 H(+)(out). NDH-1 shuttles electrons from NADH, via FMN and iron-sulfur (Fe-S) centers, to quinones in the respiratory chain. The immediate electron acceptor for the enzyme in this species is believed to be ubiquinone. Couples the redox reaction to proton translocation (for every two electrons transferred, four hydrogen ions are translocated across the cytoplasmic membrane), and thus conserves the redox energy in a proton gradient. The chain is NADH-quinone oxidoreductase subunit I from Francisella philomiragia subsp. philomiragia (strain ATCC 25017 / CCUG 19701 / FSC 153 / O#319-036).